Consider the following 91-residue polypeptide: Transcription factor znf27 (91 aa).

It is found in the nucleus. Transcription factor; part of the gene cluster 27 that mediates the biosynthesis of asparasone A, a sclerotium-specific anthraquinone pigment important for sclerotial survival. Controls the expression of the non-reducing polyketide synthase (NRPKS) pks27. The polypeptide is Transcription factor znf27 (Aspergillus flavus (strain ATCC 200026 / FGSC A1120 / IAM 13836 / NRRL 3357 / JCM 12722 / SRRC 167)).